We begin with the raw amino-acid sequence, 295 residues long: Pyrroline-5-carboxylate reductase (295 aa).

This sequence belongs to the pyrroline-5-carboxylate reductase family.

Its subcellular location is the cytoplasm. It catalyses the reaction L-proline + NADP(+) = (S)-1-pyrroline-5-carboxylate + NADPH + 2 H(+). It carries out the reaction L-proline + NAD(+) = (S)-1-pyrroline-5-carboxylate + NADH + 2 H(+). It participates in amino-acid biosynthesis; L-proline biosynthesis; L-proline from L-glutamate 5-semialdehyde: step 1/1. Its function is as follows. Catalyzes the reduction of 1-pyrroline-5-carboxylate (PCA) to L-proline. The polypeptide is Pyrroline-5-carboxylate reductase (Mycobacterium tuberculosis (strain CDC 1551 / Oshkosh)).